Here is a 789-residue protein sequence, read N- to C-terminus: Leucine-rich repeat and fibronectin type-III domain-containing protein 2 (789 aa).

The N-terminal stretch at 1–20 (METLLGGLLAFGMAFAVVDA) is a signal peptide. Positions 21–52 (CPKYCVCQNLSESLGTLCPSKGLLFVPPDIDR) constitute an LRRNT domain. Residues 21–534 (CPKYCVCQNL…MHSQILGGTM (514 aa)) lie on the Extracellular side of the membrane. Asn29 is a glycosylation site (N-linked (GlcNAc...) asparagine). 7 LRR repeats span residues 53–74 (RTVE…DFAN), 77–98 (GLVD…SFLD), 101–122 (SLRS…TLRG), 125–146 (NLQH…AFED), 150–171 (TLED…SVRR), 174–195 (NLHQ…TFAD), and 198–219 (KLAR…PIFA). Residues 242 to 288 (NPLHCNCELLWLRRLERDDDLETCGSPGGLKGRYFWHVREEEFVCEP) enclose the LRRCT domain. An Ig-like domain is found at 289 to 375 (PLITQHTHKL…GEATAMVEVS (87 aa)). A disulfide bond links Cys310 and Cys359. N-linked (GlcNAc...) asparagine glycans are attached at residues Asn332, Asn341, and Asn384. A disordered region spans residues 383 to 424 (SNSTSRTAPPKSRLSDITGSSKTSRGGGGSGGGEPPKSPPER). Over residues 407–416 (RGGGGSGGGE) the composition is skewed to gly residues. Residues 421 to 518 (PPERAVLVSE…GCAQFFTKAD (98 aa)) form the Fibronectin type-III domain. Residues 535–555 (ILVIGGIIVATLLVFIVILMV) form a helical membrane-spanning segment. Over 556-789 (RYKVCNHEAP…SSEWVMESTV (234 aa)) the chain is Cytoplasmic. Disordered regions lie at residues 577–602 (SQTN…PPKV), 619–654 (SDSS…PSLD), and 668–702 (QRKE…LGPP). The segment covering 583–599 (QPPPPSSAPAGAPPQGP) has biased composition (pro residues). Residues 619 to 638 (SDSSSSSSLGSGEAAGLGRA) show a composition bias toward low complexity. Pro residues predominate over residues 641-650 (RIPPSAPRPK). The PDZ-binding motif lies at 786-789 (ESTV).

This sequence belongs to the LRFN family. Forms heteromeric complexes with LRFN1, LRFN3, LRFN4 and LRFN5. Can form homomeric complexes, but not across cell junctions. Directly interacts with 2 NMDA receptor subunits GRIN1 and GRIN2A. Interacts with DLG1, DLG2, DLG3 and DLG4. In terms of processing, glycosylated.

It localises to the membrane. Its subcellular location is the synapse. The protein resides in the postsynaptic cell membrane. Functionally, promotes neurite outgrowth in hippocampal neurons. Enhances the cell surface expression of 2 NMDA receptor subunits GRIN1 and GRIN2A. May play a role in redistributing DLG4 to the cell periphery. In Homo sapiens (Human), this protein is Leucine-rich repeat and fibronectin type-III domain-containing protein 2 (LRFN2).